Consider the following 213-residue polypeptide: uncharacterized protein (213 aa).

A compositionally biased stretch (basic and acidic residues) spans 1-11 (MFATKDPEFEN). Disordered regions lie at residues 1–21 (MFAT…SPRN) and 63–98 (LRNK…EQAW). The segment covering 12-21 (RINTNKSPRN) has biased composition (polar residues). The segment covering 63–93 (LRNKAPKNEETKHEEHTPDNHEETDHHEAKQ) has biased composition (basic and acidic residues).

This is an uncharacterized protein from Escherichia coli (strain K12).